The primary structure comprises 94 residues: Evasin P1104 (94 aa).

A signal peptide spans 1–28 (MASNLFTIFQLAGFVAIVFIVNLHSVSA). Cystine bridges form between C48-C66, C52-C68, and C62-C79. An N-linked (GlcNAc...) asparagine glycan is attached at N51.

It is found in the secreted. Salivary chemokine-binding protein which binds to host chemokines CXCL1, CXCL2, CXCL3, CXCL5, CXCL6, CXCL12 and CXCL13. This is Evasin P1104 from Ixodes ricinus (Common tick).